We begin with the raw amino-acid sequence, 636 residues long: Polyadenylate-binding protein 1 (636 aa).

Met-1 is modified (N-acetylmethionine). 4 consecutive RRM domains span residues 11 to 89 (ASLY…WSQR), 99 to 175 (GNIF…RFKS), 191 to 268 (TNVY…RAQK), and 294 to 370 (VNLY…LAQR). The segment at 166–289 (RKVFVGRFKS…FEQMKQDRIT (124 aa)) is CSDE1-binding. Lys-299 carries the N6-methyllysine modification. Ser-315 bears the Phosphoserine mark. Position 319 is a phosphothreonine (Thr-319). Omega-N-methylarginine is present on residues Arg-385, Arg-419, Arg-432, and Arg-436. Residues Arg-455 and Arg-460 each carry the omega-N-methylated arginine; by CARM1 modification. An omega-N-methylarginine mark is found at Arg-475 and Arg-481. Arg-493 carries the post-translational modification Asymmetric dimethylarginine; alternate. Residue Arg-493 is modified to Dimethylated arginine; alternate. The residue at position 493 (Arg-493) is an Omega-N-methylarginine; alternate. Arg-506 is subject to Omega-N-methylarginine. Lys-512 bears the N6-acetyllysine mark. Arg-518 is subject to Omega-N-methylarginine. Residues 542–619 (QEPLTASMLA…AVAVLQAHQA (78 aa)) form the PABC domain.

This sequence belongs to the polyadenylate-binding protein type-1 family. As to quaternary structure, may form homodimers. Component of a multisubunit autoregulatory ribonucleoprotein complex (ARC), at least composed of IGF2BP1, PABPC1 and CSDE1. Directly interacts with IGF2BP1. Part of a complex associated with the FOS mCRD domain and consisting of HNRPD, SYNCRIP, PAIP1 and CSDE1/UNR. Interacts with PAIP1 and PAIP2 (via the PABPC1-interacting motifs PAM1 and PAM2). Interacts with PAIP1 with a 1:1 stoichiometry and with PAIP2 with a 1:2 stoichiometry. The interaction with CSDE1 is direct and RNA-independent. Found in a mRNP complex with YBX2. Interacts with TENT2/GLD2. Identified in the spliceosome C complex. Identified in a mRNP complex, at least composed of DHX9, DDX3X, ELAVL1, HNRNPU, IGF2BP1, ILF3, PABPC1, PCBP2, PTBP2, STAU1, STAU2, SYNCRIP and YBX1. The interaction with DDX3X is direct and RNA-independent. This interaction increases in stressed cells and decreases during cell recovery. Identified in a IGF2BP1-dependent mRNP granule complex containing untranslated mRNAs. Interacts with NXF1/TAP. Interacts with PIWIL1. Interacts with AGO1, AGO2, GSPT1 and GSPT2. Interacts with LARP4B. Interacts (via the second and third RRM domains and the C-terminus) with PAIP2B (via central acidic portion and C-terminus). Forms a complex with LARP1 and SHFL. Interacts with LARP4. Interacts with ZFC3H1 in a RNase-sensitive manner. Interacts with TRIM71 (via NHL repeats) in an RNA-dependent manner. Interacts with TENT5C; the interaction has no effect on TENT5C poly(A) polymerase function. Interacts with G3BP1 and G3BP2. Interacts with ENDOV; the interaction is RNA-dependent and stimulates ENDOV activity. Interacts with UPF1; the interaction is RNA-dependent. Interacts with IGF2BP2 and IGF2BP3. May interact with SETX. Interacts with RBM46. Interacts with PAN3. Post-translationally, phosphorylated by MAPKAPK2. Methylated by CARM1. Arg-493 is dimethylated, probably to asymmetric dimethylarginine.

It localises to the cytoplasm. It is found in the stress granule. The protein localises to the nucleus. The protein resides in the cell projection. Its subcellular location is the lamellipodium. Functionally, binds the poly(A) tail of mRNA, including that of its own transcript, and regulates processes of mRNA metabolism such as pre-mRNA splicing and mRNA stability. Its function in translational initiation regulation can either be enhanced by PAIP1 or repressed by PAIP2. Can probably bind to cytoplasmic RNA sequences other than poly(A) in vivo. Binds to N6-methyladenosine (m6A)-containing mRNAs and contributes to MYC stability by binding to m6A-containing MYC mRNAs. Involved in translationally coupled mRNA turnover. Implicated with other RNA-binding proteins in the cytoplasmic deadenylation/translational and decay interplay of the FOS mRNA mediated by the major coding-region determinant of instability (mCRD) domain. Involved in regulation of nonsense-mediated decay (NMD) of mRNAs containing premature stop codons; for the recognition of premature termination codons (PTC) and initiation of NMD a competitive interaction between UPF1 and PABPC1 with the ribosome-bound release factors is proposed. By binding to long poly(A) tails, may protect them from uridylation by ZCCHC6/ZCCHC11 and hence contribute to mRNA stability. This chain is Polyadenylate-binding protein 1 (PABPC1), found in Bos taurus (Bovine).